A 227-amino-acid polypeptide reads, in one-letter code: Putative molybdenum transport system permease protein YvgM (227 aa).

Helical transmembrane passes span 17–37 (VVLSFQVAAVAGIVVIILGTL), 57–77 (FMLPLVLPPTVVGFILIVIFG), 94–114 (VIFTWWAAVIASAVVAFPLMY), 142–162 (VFIHISVPLAYPSLLTGSILS), and 201–221 (TLAWAWVVCIVVISFLMLFFI). The ABC transmembrane type-1 domain maps to 17-221 (VVLSFQVAAV…VISFLMLFFI (205 aa)).

Belongs to the binding-protein-dependent transport system permease family. CysTW subfamily.

It localises to the cell membrane. Its function is as follows. could be part of the binding-protein-dependent transport system for molybdenum; probably responsible for the translocation of the substrate across the membrane. The chain is Putative molybdenum transport system permease protein YvgM (yvgM) from Bacillus subtilis (strain 168).